A 411-amino-acid polypeptide reads, in one-letter code: RNA binding protein fox-1 homolog 2 (411 aa).

A disordered region spans residues 16-175 (TRGTKRESDQ…SETKASPKRL (160 aa)). Composition is skewed to polar residues over residues 58–83 (PVSQ…TPDT) and 99–119 (NGLS…QSTE). Residues 135 to 165 (SAPATSTANASSTTDGSQTEGQQSQSQNNEN) show a composition bias toward low complexity. The RRM domain maps to 173-249 (KRLHVSNIPF…RKIEVNNATA (77 aa)).

In terms of assembly, interacts with papd4/gld2.

It localises to the nucleus. The protein localises to the cytoplasm. Functionally, RNA-binding protein that regulates alternative splicing events by binding to 5'-UGCAUGU-3' elements. Regulates alternative splicing of tissue-specific exons. This chain is RNA binding protein fox-1 homolog 2 (rbfox2), found in Xenopus laevis (African clawed frog).